Here is a 314-residue protein sequence, read N- to C-terminus: MIKVVFMGTPDFSVPVLRRLIEDGYDVVGVVTQPDRPVGRKKVMTPTPVKVEAEKHGIPVLQPLKIREQDEYEKVLALEPDLIVTAAFGQIIPKEILEAPKYGCINVHASLLPELRGGAPIHYAIMQGKEKTGITIMYMVEKLDAGDILTQVEVEIEERETTGSLFDKLSEAGAHLLSKTVPLLVQGKLEPIKQDEEKVTFAYNIKREQEKINWAKTGEEVYNHIRGLNPWPVAYTTLAGQVVKVWWGEKVPTANDAQPGTIVEIQEDGFIVVTGNETGIKITELQPAGKKRMSSSQFLRGAKLEIGMKLGEDA.

Residue 110-113 participates in (6S)-5,6,7,8-tetrahydrofolate binding; it reads SLLP.

The protein belongs to the Fmt family.

The enzyme catalyses L-methionyl-tRNA(fMet) + (6R)-10-formyltetrahydrofolate = N-formyl-L-methionyl-tRNA(fMet) + (6S)-5,6,7,8-tetrahydrofolate + H(+). Attaches a formyl group to the free amino group of methionyl-tRNA(fMet). The formyl group appears to play a dual role in the initiator identity of N-formylmethionyl-tRNA by promoting its recognition by IF2 and preventing the misappropriation of this tRNA by the elongation apparatus. In Bacillus cytotoxicus (strain DSM 22905 / CIP 110041 / 391-98 / NVH 391-98), this protein is Methionyl-tRNA formyltransferase.